A 494-amino-acid chain; its full sequence is Sphingosine-1-phosphate transporter MFSD2B (494 aa).

The span at 1 to 12 shows a compositional bias: pro residues; that stretch reads MSVPHGPTPAPV. The interval 1-26 is disordered; it reads MSVPHGPTPAPVAEPHTQEPGSDKRD. 10 helical membrane passes run 103–123, 140–160, 179–199, 223–243, 277–297, 310–330, 339–359, 360–380, 402–422, and 449–469; these read LMPW…FLWF, CLFQ…TMIL, MAGT…AHGS, IAAA…CLGV, VVSF…LVLF, NLVL…EWVL, AFGI…PSAP, VAYV…LLPW, TIFY…ALGI, and VLIG…LLVG. Residues 473–494 are disordered; sequence KMPRQDTSSQLSLRRRTSYSLA. The segment covering 485–494 has biased composition (basic residues); the sequence is LRRRTSYSLA.

This sequence belongs to the major facilitator superfamily. In terms of tissue distribution, widely expressed with highest expression in spleen, lung and testis. Predominantly expressed in erythroid lineages giving rise to erythrocytes and platelets, but absent in lymphoid lineages.

Its subcellular location is the cell membrane. The enzyme catalyses sphing-4-enine 1-phosphate(in) = sphing-4-enine 1-phosphate(out). The catalysed reaction is sphinganine 1-phosphate(in) = sphinganine 1-phosphate(out). It carries out the reaction sphinga-4E,14Z-dienine-1-phosphate(in) = sphinga-4E,14Z-dienine-1-phosphate(out). Its function is as follows. Lipid transporter that specifically mediates export of sphingosine-1-phosphate in red blood cells and platelets. Sphingosine-1-phosphate is a signaling sphingolipid and its export from red blood cells into in the plasma is required for red blood cell morphology. Sphingosine-1-phosphate export from platelets is required for platelet aggregation and thrombus formation. Mediates the export of different sphingosine-1-phosphate (S1P) species, including S1P(d18:0) (sphinganine 1-phosphate), S1P (d18:1) (sphing-4-enine 1-phosphate) and S1P (d18:2) (sphinga-4E,14Z-dienine-1-phosphate). Release of sphingosine-1-phosphate is facilitated by a proton gradient. In contrast, cations, such as sodium, are not required to drive sphingosine-1-phosphate transport. In addition to export, also able to mediate S1P import. Does not transport lysophosphatidylcholine (LPC). The protein is Sphingosine-1-phosphate transporter MFSD2B of Mus musculus (Mouse).